A 1218-amino-acid polypeptide reads, in one-letter code: Coatomer subunit alpha-2 (1218 aa).

8 WD repeats span residues 7 to 48, 49 to 88, 91 to 132, 133 to 172, 202 to 241, 246 to 285, 288 to 326, and 363 to 404; these read TKSN…DRFD, EHEGPVRGVHFHNSQPLFVSGGDDYKIKVWNYKTHRCLFT, GHLD…SVLT, GHNHYVMCASFHPKEDLVVSASLDQTVRVWDIGALKKKSA, GHDRGVNWASFHPTLPLIVSGADDRQVKLWRMNETKAWEV, GHMNNVSSVMFHAKQDIIVSNSEDKSIRVWDATKRTGIQT, REHDRFWILAVHPEINLLAAGHDNGMIVFKLERERPAFA, and SLNQ…VGRS. The disordered stretch occupies residues 826–849; sequence NRGAVDEEEEDVEGDWGEGLDKFD. Acidic residues predominate over residues 831–843; sequence DEEEEDVEGDWGE.

As to quaternary structure, oligomeric complex that consists of at least the alpha, beta, beta', gamma, delta, epsilon and zeta subunits.

The protein localises to the cytoplasm. Its subcellular location is the golgi apparatus membrane. It is found in the cytoplasmic vesicle. The protein resides in the COPI-coated vesicle membrane. In terms of biological role, the coatomer is a cytosolic protein complex that binds to dilysine motifs and reversibly associates with Golgi non-clathrin-coated vesicles, which further mediate biosynthetic protein transport from the ER, via the Golgi up to the trans Golgi network. Coatomer complex is required for budding from Golgi membranes, and is essential for the retrograde Golgi-to-ER transport of dilysine-tagged proteins. In Arabidopsis thaliana (Mouse-ear cress), this protein is Coatomer subunit alpha-2.